The primary structure comprises 39 residues: L-amino-acid oxidase (39 aa).

The protein belongs to the flavin monoamine oxidase family. FIG1 subfamily. As to quaternary structure, monomer. This is in contrast with most of its orthologs, that are non-covalently linked homodimers. FAD is required as a cofactor. Post-translationally, N-glycosylated. In terms of tissue distribution, expressed by the venom gland.

It localises to the secreted. The catalysed reaction is an L-alpha-amino acid + O2 + H2O = a 2-oxocarboxylate + H2O2 + NH4(+). It catalyses the reaction L-leucine + O2 + H2O = 4-methyl-2-oxopentanoate + H2O2 + NH4(+). In terms of biological role, catalyzes an oxidative deamination of predominantly hydrophobic and aromatic L-amino acids, thus producing hydrogen peroxide that may contribute to the diverse toxic effects of this enzyme. Shows activity on L-Leu. Exhibits diverse biological activities, such as hemorrhage, hemolysis, edema, apoptosis of vascular endothelial cells or tumor cell lines, and antiparasitic activities, as well as regulation of platelet aggregation. Effects of snake L-amino oxidases on platelets are controversial, since they either induce aggregation or inhibit agonist-induced aggregation. These different effects are probably due to different experimental conditions. In addition, this protein inhibits dose-dependently the growth of Gram-positive, Gram-negative bacteria and yeast, probably by the generation of hydrogen peroxide. This Bothrops marajoensis (Marajo lancehead) protein is L-amino-acid oxidase.